The following is a 359-amino-acid chain: B-cell differentiation antigen CD72 (359 aa).

At 1 to 95 (MAEAITYADL…LPCRTTCLRY (95 aa)) the chain is on the cytoplasmic side. Residues Y7 and Y39 each carry the phosphotyrosine; by LYN modification. Residues 96–116 (LLLGLLLTCLLLGVTAICLGV) traverse the membrane as a helical; Signal-anchor for type II membrane protein segment. Over 117–359 (RYLQVSQQLQ…CEMTAFRFPD (243 aa)) the chain is Extracellular. N136 carries N-linked (GlcNAc...) asparagine glycosylation. The region spanning 232 to 352 (CCPSGWIMHQ…RSSLPYICEM (121 aa)) is the C-type lectin domain. Disulfide bonds link C233–C244, C261–C350, and C325–C342.

Homodimer; disulfide-linked. Associates with CD5. Interacts (tyrosine phosphorylated) with PTPN6/SHP-1. In terms of processing, phosphorylated upon engagement of the B-cell receptor, probably by LYN or SYK. Phosphorylation at Tyr-7 is important for interaction with PTPN6/SHP-1. As to expression, pre-B-cells and B-cells but not terminally differentiated plasma cells.

It localises to the membrane. Its function is as follows. Co-receptor of B cell receptor (BCR) that plays both positive and negative roles on B-cell functions. Recognizes the Sm/ribonucleoprotein (RNP) self-antigen ligand, and coligation of CD72 and BCR inhibits BCR signaling. Mechanistically, ligand binding leads to the recruitment of PTPN6/SHP-1 to the BCR complex which is inhibitory to BCR signaling. Also acts as a ligand for CD5 and thereby plays a critical role in maintaining regulatory T and B-cell homeostasis. The chain is B-cell differentiation antigen CD72 (CD72) from Homo sapiens (Human).